The following is a 170-amino-acid chain: MSVLEVVLYPDEGLAKVCEPVAQVDDELNQFIDDMFDTMYEHEGIGLAAPQVGVLKRVITIDIEGDKTNQVVLINPEILESCGETGIEEGCLSIPGHRALVPRKEKVKVKALNRKGEEVIYEADGLFAICIQHEIDHLNGVLFVDHISALKRQRIKEKMQKLKKQIERAK.

Fe cation is bound by residues Cys-91 and His-133. Residue Glu-134 is part of the active site. His-137 is a binding site for Fe cation.

It belongs to the polypeptide deformylase family. Requires Fe(2+) as cofactor.

It catalyses the reaction N-terminal N-formyl-L-methionyl-[peptide] + H2O = N-terminal L-methionyl-[peptide] + formate. Removes the formyl group from the N-terminal Met of newly synthesized proteins. Requires at least a dipeptide for an efficient rate of reaction. N-terminal L-methionine is a prerequisite for activity but the enzyme has broad specificity at other positions. The sequence is that of Peptide deformylase from Actinobacillus pleuropneumoniae serotype 7 (strain AP76).